The sequence spans 501 residues: MAAASVTPPGSLELLQPGFSKTLLGTKLEAKYLCSACRNVLRRPFQAQCGHRYCSFCLASILSSGPQNCAACVHEGIYEEGISILESSSAFPDNAARREVESLPAVCPSDGCTWKGTLKEYESCHEGRCPLMLTECPACKGLVRLGEKERHLEHECPERSLSCRHCRAPCCGADVKAHHEVCPKFPLTCDGCGKKKIPREKFQDHVKTCGKCRVPCRFHAIGCLETVEGEKQQEHEVQWLREHLAMLLSSVLEAKPLLGDQSHAGSELLQRCESLEKKTATFENIVCVLNREVERVAMTAEACSRQHRLDQDKIEALSSKVQQLERSIGLKDLAMADLEQKVLEMEASTYDGVFIWKISDFARKRQEAVAGRIPAIFSPAFYTSRYGYKMCLRIYLNGDGTGRGTHLSLFFVVMKGPNDALLRWPFNQKVTLMLLDQNNREHVIDAFRPDVTSSSFQRPVNDMNIASGCPLFCPVSKMEAKNSYVRDDAIFIKAIVDLTGL.

A2 carries the N-acetylalanine modification. Residue S5 is modified to Phosphoserine. T7 carries the phosphothreonine modification. S11 is modified (phosphoserine). T22 bears the Phosphothreonine mark. K31 participates in a covalent cross-link: Glycyl lysine isopeptide (Lys-Gly) (interchain with G-Cter in ubiquitin). The segment at 34–73 (CSACRNVLRRPFQAQCGHRYCSFCLASILSSGPQNCAACV) adopts an RING-type zinc-finger fold. T117 is modified (phosphothreonine; by PKC). TRAF-type zinc fingers lie at residues 124–180 (CHEG…AHHE) and 177–233 (AHHE…EKQQ). The interval 283-293 (ENIVCVLNREV) is important for interaction with BIRC2 and BIRC3. The stretch at 299 to 348 (TAEACSRQHRLDQDKIEALSSKVQQLERSIGLKDLAMADLEQKVLEMEAS) forms a coiled coil. Residue K320 forms a Glycyl lysine isopeptide (Lys-Gly) (interchain with G-Cter in ubiquitin) linkage. In terms of domain architecture, MATH spans 351-496 (DGVFIWKISD…DDAIFIKAIV (146 aa)).

The protein belongs to the TNF receptor-associated factor family. A subfamily. Homotrimer. Heterotrimer with TRAF1. Heterotrimer with TRAF3 (via TRAF domain). The domain containing the RING-type and the first TRAF-type zinc finger can also form homodimers (in vitro). Interacts with TNFRSF1B/TNFR2. Interacts with TNFRSF5/CD40. Interacts with TNFRSF4, TNFRSF7/CD27, TNFRSF8/CD30, TNFRSF9/CD137, TNFRSF11A/RANK, TNFRSF13B/TACI, TNFRSF14, TNFRSF16/NGFR, TNFRSF17/BCMA, TNFRSF18/AITR, TNFRSF19/TROY, TNFRSF19L/RELT and EDAR. Stimulation of TNF-alpha receptor TNFRSF1A leads to the formation of two distinct signaling complexes. Plasma membrane-bound complex I is composed of TNFRSF1A, TRADD, RIPK1, TRAF2 and BIRC2/c-IAP1 or BIRC3 which interacts with CHUCK/IKK-alpha, IKBKB/IKK-beta and IKBKG/IKK-gamma promoting cell survival. Subsequently, TRADD, RIPK1 and TRAF2 dissociate from TNFRSF1A and form cytoplasmic complex II with FADD and caspase CASP8 promoting cell apoptosis. Interacts with TRADD. Identified in a complex with TNFRSF1A, RIPK1 and IKBKB/IKK-beta. Interacts with RIPK2. Interacts with BIRC2 and BIRC3 N-terminus; a single BIRC2 or BIRC3 molecule interacts with a heterotrimer formed by TRAF1 and TRAF2, or a TRAF2 homotrimer. Identified in a complex composed of TRAF2, TRAF3, BIRC2 and BIRC3. Interacts with BIRC2; the interaction promotes BIRC2 stability. Interaction with BIRC2 and/or BIRC3 is essential for ubiquitination of IKBKE, degradation of NFKBIA and activation of NF-kappa-B. Within complex I, phosphorylated TRAF2 interacts (via 'Lys-63'-linked polyubiquitin chains) with CHUCK/IKK-alpha, IKBKB/IKK-beta, IKBKG/IKK-gamma TAB2, TAB3 and TAK1 in response to TNF-alpha stimulation. Within complex I, interacts with UXT isoform 1 (via TPQE motif); the interaction prevents the recruitment of FADD and CASP8/caspase 8 to complex I. Forms a complex composed of TNFRSF8/CD30 or TNFRSF1B/TNFR2, and TRAF1, TRAF2 and E3 ligase TRAIP. Within the complex, interacts with TRAIP; the interaction inhibits TRAF2-mediated NF-kappa B activation. Component of a complex composed of TANK and TBK1. Interacts with TRPC4AP. Interacts with MAP3K1/MEKK1, MAP3K5/ASK1 and MAP3K11/MLK3 in response to TNF-alpha stimulation; the interaction leads to JNK activation and interaction with MAP3K5 is inhibited by PRMT1. Component of a complex composed of MAP3K14/NIK BIRC3 and TRAF3; the interaction leads to BIRC2/3-mediated ubiquitination of TRAF3 upon CD40 engagement in a TRAF2-dependent manner. Interacts with MAP3K14/NIK in response to TNF-alpha stimulation; the interaction leads to NF-kappa B activation. Interacts with PEG3; the interaction may promote TRAF2-mediated NF-kappa B activation. Interacts with HIVEP3; the interaction may inhibit TNF-alpha-TRAF2-mediated NF-kappa B and JNK activation. Interacts with TANK/ITRAF; the interaction prevents interaction between TNFRSF1B/TNFR2 and TRAF2. Interacts with deubiquitinating enzyme CYLD; the interaction results in the deubiquitination and inactivation of TRAF2. Interacts with SIAH2; the interaction leads to TRAF2 ubiquitination and degradation. Interacts with E2 conjugating enzyme UBE2N/Ubc13, E3 ligase ITCH and RNF11 in response to TNF-alpha stimulation. Interacts with ubiquitin-editing enzyme TNFAIP3/A20 in response to TNF-alpha stimulation; the interaction promotes TRAF2 dissociation from UBE2N/Ubc13, ITCH, RNF11 and TAX1BP1 and prevents prolonged TRAF-2 ubiquitination. Interacts with TAX1BP1 in response to TNF-alpha stimulation; the interaction promotes TRAF2 dissociation from UBE2N/Ubc13 and TNFAIP3/A20, and prevents prolonged TRAF-2 ubiquitination. Interacts (via C-terminus) with EIF2AK2/PKR (via the kinase catalytic domain). Interacts with deubiquitinating enzyme USP48. Interacts with PTPN2; probably involved in TNF-mediated signaling. Interacts with Toll-like receptor TLR4/3 adapter TICAM1/TRIF; the interaction may promote TICAM1 ubiquitination. Interacts with kinase/endoribonuclease ERN1/IRE1 and DAB2IP in response to ER stress; the interaction requires DAB2IP. Interacts with ERN1/IRE1 and TAOK3 in response to ER stress; the interaction may promote TRAF2 phosphorylation. Interacts (via zinc fingers) with DAB2IP (via C-terminus PER domain)in response to TNF-alpha stimulation. Interacts with CASP8AP2/FLASH. Interacts with NFATC2IP; the interaction may repress IL-4 production in T cells. Interacts with kinase CDK9. Interacts with sphingosine kinase 1 SPHK1. Interacts with kinase TNIK. Interacts with TRAFD1. Interacts with DNA phosphodiesterase TDP2. Interacts with MAVS/IPS1. Interacts with CARD14. Interacts with Epstein-Barr virus LMP1/BNFL1. Interacts with GPS2. Interacts with XPNPEP3. Interacts with RIPK3. Interacts with RELL2. Interacts with LRRC19. Interacts with GAPDH; promoting TRAF2 ubiquitination. Phosphorylated at several serine residues within the first 128 amino acid residues. Phosphorylated at Thr-117 in response to signaling via TNF and TNFRSF1A. Phosphorylation at Thr-117 is required for 'Lys-63'-linked polyubiquitination, but not for 'Lys-48'-linked polyubiquitination. Phosphorylation at Thr-117 is important for interaction with IKKA and IKKB, activation of IKK and subsequent activation of NF-kappa-B. Post-translationally, undergoes both 'Lys-48'-linked and 'Lys-63'-linked polyubiquitination. Polyubiquitinated via 'Lys-63'-linked ubiquitin in response to TNF signaling; this requires prior phosphorylation at Thr-117. 'Lys-63'-linked polyubiquitination promotes TRAF2-mediated activation of NF-kappa-B. Can be polyubiquitinated at several Lys residues via 'Lys-48'-linked ubiquitin chains in response to TNF signaling, leading to proteasomal degradation. Autoubiquitinated, leading to its subsequent proteasomal degradation. Polyubiquitinated by BIRC2 and SIAH2, leading to its subsequent proteasomal degradation. Deubiquitinated by CYLD, a protease that specifically cleaves 'Lys-63'-linked polyubiquitin chains. Ubiquination is inhibited by LRRC19; inhibits proteasomal degradation. Ubiquitinated at Lys-320 by the SCF(FBXL2) complex, leading to its degradation by the proteasome. Ubiquitinated by E3 ubiquitin-protein ligase complex containing FBXO7; leading to repression of NF-kappa-B signaling.

It is found in the cytoplasm. It catalyses the reaction S-ubiquitinyl-[E2 ubiquitin-conjugating enzyme]-L-cysteine + [acceptor protein]-L-lysine = [E2 ubiquitin-conjugating enzyme]-L-cysteine + N(6)-ubiquitinyl-[acceptor protein]-L-lysine.. Its pathway is protein modification; protein ubiquitination. With respect to regulation, has very low E3 ubiquitin ligase activity in the absence of sphingosine-1-phosphate. E3 ubiquitin ligase activity is strongly activated by cytoplasmic sphingosine-1-phosphate. In terms of biological role, E3 ubiquitin-protein ligase that regulates activation of NF-kappa-B and JNK and plays a central role in the regulation of cell survival and apoptosis. Catalyzes 'Lys-63'-linked ubiquitination of target proteins, such as BIRC3, IKBKE, MLST8, RIPK1 and TICAM1. Is an essential constituent of several E3 ubiquitin-protein ligase complexes, where it promotes the ubiquitination of target proteins by bringing them into contact with other E3 ubiquitin ligases. Regulates BIRC2 and BIRC3 protein levels by inhibiting their autoubiquitination and subsequent degradation; this does not depend on the TRAF2 RING-type zinc finger domain. Plays a role in mediating activation of NF-kappa-B by EIF2AK2/PKR. In complex with BIRC2 or BIRC3, promotes ubiquitination of IKBKE. Acts as a regulator of mTORC1 and mTORC2 assembly by mediating 'Lys-63'-linked ubiquitination of MLST8, thereby inhibiting formation of the mTORC2 complex, while facilitating assembly of the mTORC1 complex. Required for normal antibody isotype switching from IgM to IgG. The chain is TNF receptor-associated factor 2 from Homo sapiens (Human).